We begin with the raw amino-acid sequence, 339 residues long: N-acetyl-gamma-glutamyl-phosphate reductase (339 aa).

Cys-145 is a catalytic residue.

It belongs to the NAGSA dehydrogenase family. Type 1 subfamily.

It localises to the cytoplasm. It catalyses the reaction N-acetyl-L-glutamate 5-semialdehyde + phosphate + NADP(+) = N-acetyl-L-glutamyl 5-phosphate + NADPH + H(+). It participates in amino-acid biosynthesis; L-arginine biosynthesis; N(2)-acetyl-L-ornithine from L-glutamate: step 3/4. Functionally, catalyzes the NADPH-dependent reduction of N-acetyl-5-glutamyl phosphate to yield N-acetyl-L-glutamate 5-semialdehyde. The protein is N-acetyl-gamma-glutamyl-phosphate reductase of Thermotoga petrophila (strain ATCC BAA-488 / DSM 13995 / JCM 10881 / RKU-1).